Reading from the N-terminus, the 238-residue chain is tRNA (guanine-N(7)-)-methyltransferase (238 aa).

S-adenosyl-L-methionine contacts are provided by Glu-68, Glu-93, Asp-120, and Asp-143. Asp-143 is an active-site residue. Substrate contacts are provided by residues Lys-147, Asp-179, and 216-219; that span reads TKFE.

Belongs to the class I-like SAM-binding methyltransferase superfamily. TrmB family.

It catalyses the reaction guanosine(46) in tRNA + S-adenosyl-L-methionine = N(7)-methylguanosine(46) in tRNA + S-adenosyl-L-homocysteine. The protein operates within tRNA modification; N(7)-methylguanine-tRNA biosynthesis. Functionally, catalyzes the formation of N(7)-methylguanine at position 46 (m7G46) in tRNA. This Shewanella woodyi (strain ATCC 51908 / MS32) protein is tRNA (guanine-N(7)-)-methyltransferase.